Consider the following 422-residue polypeptide: Inner membrane ALBINO3-like protein 2, chloroplastic (422 aa).

The segment covering 1-10 has biased composition (polar residues); sequence MALQMKQSPS. The disordered stretch occupies residues 1–22; it reads MALQMKQSPSMGVRRASQPVLP. The helical transmembrane segment at 65–85 threads the bilayer; that stretch reads LYTLAEGGPIDVLAQFFEFVL. Topologically, residues 86-96 are stromal; it reads QTLDEGLESAK. A helical membrane pass occupies residues 97–117; sequence IPYSYGFAIIALTVLVKVATF. Residues 118 to 166 lie on the Lumenal side of the membrane; that stretch reads PLTQKQVESTLSLQALQPRVKELQAKYADDPENLQLETARLYKEAGVNP. A helical transmembrane segment spans residues 167-187; sequence LAGCFPTLATIPVFIGLYNAL. Residues 188-225 are Stromal-facing; it reads SNAAKEGLLTEGFFWIPSLGGPTTIGGGLEWLVPFENG. The helical transmembrane segment at 226-246 threads the bilayer; the sequence is APPVGWANAAAYLVMPVLLVA. Over 247-275 the chain is Lumenal; sequence SQYASQKIISSQNNQDPSQQQAQAILKFL. The chain crosses the membrane as a helical span at residues 276-296; that stretch reads PLMIGWFSLNVPSGLTLYWFV. The Stromal segment spans residues 297-422; it reads NNLLSTGQQL…GSEEGKDNSA (126 aa). The disordered stretch occupies residues 325–422; the sequence is TAGSSTPIVK…GSEEGKDNSA (98 aa). Over residues 334-350 the composition is skewed to basic and acidic residues; the sequence is KPKEERVKKVTGKELGS. Over residues 358-367 the composition is skewed to acidic residues; the sequence is DGEEVEDVEV. Residues 368–380 show a composition bias toward low complexity; the sequence is EVVSSGSSSSSGS. The segment covering 386–400 has biased composition (basic and acidic residues); sequence RKGEKFRALKAREAA.

It belongs to the OXA1/ALB3/YidC (TC 2.A.9.2) family.

The protein resides in the plastid. Its subcellular location is the chloroplast thylakoid membrane. Its function is as follows. Required for the insertion of some light-harvesting complexes (LHC) proteins into the chloroplast thylakoid membrane. Essential for the assembly and activity of LHC I and II. Its function is probably partly distinct from that of ALB3.1. This is Inner membrane ALBINO3-like protein 2, chloroplastic (ALB3.2) from Chlamydomonas reinhardtii (Chlamydomonas smithii).